A 404-amino-acid polypeptide reads, in one-letter code: Iron-sulfur assembly protein IscA2 (404 aa).

Residues 244-289 are a coiled coil; sequence KEEDEKKLDKLLKKRNIKKRDIVTITEEAKEELKKIISINKKENNN.

Belongs to the HesB/IscA family. As to quaternary structure, dimer. Homotetramer. Interacts with ABCB6.

Its subcellular location is the mitochondrion. It participates in cofactor biosynthesis; iron-sulfur cluster biosynthesis. In terms of biological role, participates in iron-sulfur cluster formation (ISC) pathway for iron-sulfur (Fe-S) cluster biogenesis. Can bind and transfer [4Fe-4S] clusters to target apo-proteins. This Plasmodium falciparum (isolate 3D7) protein is Iron-sulfur assembly protein IscA2.